Consider the following 443-residue polypeptide: UDP-N-acetylmuramate--L-alanine ligase (443 aa).

110–116 provides a ligand contact to ATP; it reads GAHGKTS.

This sequence belongs to the MurCDEF family.

The protein localises to the cytoplasm. It catalyses the reaction UDP-N-acetyl-alpha-D-muramate + L-alanine + ATP = UDP-N-acetyl-alpha-D-muramoyl-L-alanine + ADP + phosphate + H(+). The protein operates within cell wall biogenesis; peptidoglycan biosynthesis. Functionally, cell wall formation. This is UDP-N-acetylmuramate--L-alanine ligase from Streptococcus agalactiae serotype V (strain ATCC BAA-611 / 2603 V/R).